The following is a 389-amino-acid chain: S-adenosylmethionine synthase (389 aa).

Residue His19 coordinates ATP. Asp21 lines the Mg(2+) pocket. K(+) is bound at residue Glu47. L-methionine-binding residues include Glu60 and Gln103. Residues 103-113 are flexible loop; that stretch reads QSGDIAQGVDR. ATP-binding positions include 168-170, 234-235, Asp243, 249-250, Ala266, and Lys270; these read DGK, RF, and RK. An L-methionine-binding site is contributed by Asp243. Lys274 contributes to the L-methionine binding site.

This sequence belongs to the AdoMet synthase family. As to quaternary structure, homotetramer; dimer of dimers. Mg(2+) serves as cofactor. K(+) is required as a cofactor.

The protein resides in the cytoplasm. The enzyme catalyses L-methionine + ATP + H2O = S-adenosyl-L-methionine + phosphate + diphosphate. Its pathway is amino-acid biosynthesis; S-adenosyl-L-methionine biosynthesis; S-adenosyl-L-methionine from L-methionine: step 1/1. Catalyzes the formation of S-adenosylmethionine (AdoMet) from methionine and ATP. The overall synthetic reaction is composed of two sequential steps, AdoMet formation and the subsequent tripolyphosphate hydrolysis which occurs prior to release of AdoMet from the enzyme. The protein is S-adenosylmethionine synthase of Nitratidesulfovibrio vulgaris (strain DSM 19637 / Miyazaki F) (Desulfovibrio vulgaris).